A 173-amino-acid polypeptide reads, in one-letter code: Ferritin-1 heavy chain (173 aa).

A Ferritin-like diiron domain is found at Gln6–Gly155. Fe cation contacts are provided by Glu23, Glu58, His61, Glu103, and Gln137.

The protein belongs to the ferritin family. In terms of assembly, oligomer of 24 subunits. The functional molecule forms a roughly spherical shell with a diameter of 12 nm and contains a central cavity into which the insoluble mineral iron core is deposited.

It catalyses the reaction 4 Fe(2+) + O2 + 4 H(+) = 4 Fe(3+) + 2 H2O. Its function is as follows. Stores iron in a soluble, non-toxic, readily available form. Important for iron homeostasis. Has ferroxidase activity. Iron is taken up in the ferrous form and deposited as ferric hydroxides after oxidation. This chain is Ferritin-1 heavy chain (SCM-1), found in Schistosoma mansoni (Blood fluke).